We begin with the raw amino-acid sequence, 484 residues long: Cobyric acid synthase (484 aa).

Residues 249-438 (QLRVAVPVFT…LHGIFDRPET (190 aa)) form the GATase cobBQ-type domain. The active-site Nucleophile is the C330. Residue H430 is part of the active site.

This sequence belongs to the CobB/CobQ family. CobQ subfamily.

The protein operates within cofactor biosynthesis; adenosylcobalamin biosynthesis. In terms of biological role, catalyzes amidations at positions B, D, E, and G on adenosylcobyrinic A,C-diamide. NH(2) groups are provided by glutamine, and one molecule of ATP is hydrogenolyzed for each amidation. In Vibrio cholerae serotype O1 (strain ATCC 39315 / El Tor Inaba N16961), this protein is Cobyric acid synthase.